Here is a 586-residue protein sequence, read N- to C-terminus: Guanylate-binding protein 5 (586 aa).

Residues M1 to D306 form an NLRP3-binding region. The GTPase domain (Globular) stretch occupies residues M1–C309. The region spanning T35–M276 is the GB1/RHD3-type G domain. Residues G45–S52, V67–S69, R181–D182, and L245 each bind GTP. Residues M529–L586 form a required for tetramerization, but not for dimerization region. The residue at position 583 (C583) is a Cysteine methyl ester. C583 carries the S-geranylgeranyl cysteine lipid modification. A propeptide spans V584–L586 (removed in mature form).

Belongs to the TRAFAC class dynamin-like GTPase superfamily. GB1/RHD3 GTPase family. GB1 subfamily. As to quaternary structure, homodimer; homodimerizes upon GTP-binding, forming a close face-to-face dimer. Heterodimer with other family members, including GBP1, GBP2, GBP3 and GBP4. May also form tetramers (dimer of dimers) in the presence of GTP. Interacts with NLRP3, possibly in its tetrameric form, and promotes PYCARD/ASC polymerization. In terms of assembly, homodimer; homodimerizes upon GTP-binding. GDP-bound form remains homodimeric. Homodimer; homodimerizes upon GTP-binding. GDP-bound is monomeric. Post-translationally, isoprenylation is required for proper subcellular location. In terms of tissue distribution, expressed in peripheral blood monocytes (at protein level).

Its subcellular location is the cytoplasmic vesicle membrane. It localises to the golgi apparatus membrane. It is found in the cytoplasm. It carries out the reaction GTP + H2O = GDP + phosphate + H(+). Functionally, interferon (IFN)-inducible GTPase that plays important roles in innate immunity against a diverse range of bacterial, viral and protozoan pathogens. Hydrolyzes GTP, but in contrast to other family members, does not produce GMP. Following infection, recruited to the pathogen-containing vacuoles or vacuole-escaped bacteria and acts as a positive regulator of inflammasome assembly by promoting the release of inflammasome ligands from bacteria. Acts by promoting lysis of pathogen-containing vacuoles, releasing pathogens into the cytosol. Following pathogen release in the cytosol, promotes recruitment of proteins that mediate bacterial cytolysis: this liberates ligands that are detected by inflammasomes, such as lipopolysaccharide (LPS) that activates the non-canonical CASP4/CASP11 inflammasome or double-stranded DNA (dsDNA) that activates the AIM2 inflammasome. As an activator of NLRP3 inflammasome assembly: promotes selective NLRP3 inflammasome assembly in response to microbial and soluble, but not crystalline, agents. Independently of its GTPase activity, acts as an inhibitor of various viruses infectivity, such as HIV-1, Zika and influenza A viruses, by inhibiting FURIN-mediated maturation of viral envelope proteins. In terms of biological role, antigenic tumor-specific truncated splice form. The protein is Guanylate-binding protein 5 of Homo sapiens (Human).